Reading from the N-terminus, the 256-residue chain is Ribosomal RNA small subunit methyltransferase J (256 aa).

Residues 101 to 102, 117 to 118, 153 to 154, and aspartate 176 each bind S-adenosyl-L-methionine; these read RD, ER, and SS.

It belongs to the methyltransferase superfamily. RsmJ family.

The protein resides in the cytoplasm. The enzyme catalyses guanosine(1516) in 16S rRNA + S-adenosyl-L-methionine = N(2)-methylguanosine(1516) in 16S rRNA + S-adenosyl-L-homocysteine + H(+). Specifically methylates the guanosine in position 1516 of 16S rRNA. This is Ribosomal RNA small subunit methyltransferase J from Photobacterium profundum (strain SS9).